Consider the following 1332-residue polypeptide: DNA-directed RNA polymerase subunit beta'' (1332 aa).

4 residues coordinate Zn(2+): Cys-220, Cys-291, Cys-298, and Cys-301.

This sequence belongs to the RNA polymerase beta' chain family. RpoC2 subfamily. As to quaternary structure, in plastids the minimal PEP RNA polymerase catalytic core is composed of four subunits: alpha, beta, beta', and beta''. When a (nuclear-encoded) sigma factor is associated with the core the holoenzyme is formed, which can initiate transcription. Requires Zn(2+) as cofactor.

The protein resides in the plastid. It is found in the chloroplast. The catalysed reaction is RNA(n) + a ribonucleoside 5'-triphosphate = RNA(n+1) + diphosphate. Functionally, DNA-dependent RNA polymerase catalyzes the transcription of DNA into RNA using the four ribonucleoside triphosphates as substrates. This chain is DNA-directed RNA polymerase subunit beta'', found in Lotus japonicus (Lotus corniculatus var. japonicus).